Reading from the N-terminus, the 316-residue chain is Taste receptor type 2 member 109 (316 aa).

The Extracellular segment spans residues 1-14; sequence MEHLLKRTFDITEN. A helical transmembrane segment spans residues 15–35; that stretch reads ILLIILFIELIIGLIGNGFTA. Topologically, residues 36–62 are cytoplasmic; it reads LVHCMDWVKRKKMSLVNKILTALATSR. A helical membrane pass occupies residues 63-83; that stretch reads IFLLWFMLVGFPISSLYPYLV. The Extracellular segment spans residues 84–94; that stretch reads TTRLMIQFTST. Residues 95–115 traverse the membrane as a helical segment; it reads LWTIANHISVWFATCLSVFYF. Residues 116-135 lie on the Cytoplasmic side of the membrane; it reads LKIANFSNSPFLYLKRRVEK. The chain crosses the membrane as a helical span at residues 136–156; that stretch reads VVSVTLLVSLVLLFLNILLLN. Residues 157-191 lie on the Extracellular side of the membrane; it reads LEINMCINEYHQINISYIFISYYHLSCQIQVLGSH. Residue Asn170 is glycosylated (N-linked (GlcNAc...) asparagine). Residues 192–212 traverse the membrane as a helical segment; that stretch reads IIFLSVPVVLSLSTFLLLIFS. Residues 213 to 241 are Cytoplasmic-facing; that stretch reads LWTLHKRMQQHVQGGRDARTTAHFKALQA. The chain crosses the membrane as a helical span at residues 242–262; that stretch reads VIAFLLLYSIFILSLLLQFWI. Residues 263–270 are Extracellular-facing; the sequence is HGLRKKPP. A helical transmembrane segment spans residues 271–291; sequence FIAFCQVVDTAFPSFHSYVLI. Residues 292–316 lie on the Cytoplasmic side of the membrane; that stretch reads LRDRKLRHASLSVLSWLKCRPNYVK.

This sequence belongs to the G-protein coupled receptor T2R family.

The protein resides in the membrane. Functionally, putative taste receptor which may play a role in the perception of bitterness. The protein is Taste receptor type 2 member 109 of Mus musculus (Mouse).